A 498-amino-acid polypeptide reads, in one-letter code: UPF0371 protein cauri_2449 (498 aa).

The protein belongs to the UPF0371 family.

The sequence is that of UPF0371 protein cauri_2449 from Corynebacterium aurimucosum (strain ATCC 700975 / DSM 44827 / CIP 107346 / CN-1) (Corynebacterium nigricans).